The chain runs to 345 residues: Phosphoribosylformylglycinamidine cyclo-ligase (345 aa).

This sequence belongs to the AIR synthase family.

The protein localises to the cytoplasm. It carries out the reaction 2-formamido-N(1)-(5-O-phospho-beta-D-ribosyl)acetamidine + ATP = 5-amino-1-(5-phospho-beta-D-ribosyl)imidazole + ADP + phosphate + H(+). It participates in purine metabolism; IMP biosynthesis via de novo pathway; 5-amino-1-(5-phospho-D-ribosyl)imidazole from N(2)-formyl-N(1)-(5-phospho-D-ribosyl)glycinamide: step 2/2. The sequence is that of Phosphoribosylformylglycinamidine cyclo-ligase from Enterobacter sp. (strain 638).